The following is a 299-amino-acid chain: Bifunctional protein FolD (299 aa).

NADP(+) contacts are provided by residues 166–168, Ser191, and Ile232; that span reads GRS.

This sequence belongs to the tetrahydrofolate dehydrogenase/cyclohydrolase family. In terms of assembly, homodimer.

The catalysed reaction is (6R)-5,10-methylene-5,6,7,8-tetrahydrofolate + NADP(+) = (6R)-5,10-methenyltetrahydrofolate + NADPH. The enzyme catalyses (6R)-5,10-methenyltetrahydrofolate + H2O = (6R)-10-formyltetrahydrofolate + H(+). Its pathway is one-carbon metabolism; tetrahydrofolate interconversion. In terms of biological role, catalyzes the oxidation of 5,10-methylenetetrahydrofolate to 5,10-methenyltetrahydrofolate and then the hydrolysis of 5,10-methenyltetrahydrofolate to 10-formyltetrahydrofolate. This is Bifunctional protein FolD from Anaplasma marginale (strain St. Maries).